A 619-amino-acid polypeptide reads, in one-letter code: Magnesium-chelatase 67 kDa subunit (619 aa).

ATP is bound at residue 33-40 (STVGSGKS). The segment at 273–321 (TRMPEREPSEEEMQQEEPPPPEEQPEQEGEDENAPPDETDSDADEEQEE) is disordered. Residues 280-321 (PSEEEMQQEEPPPPEEQPEQEGEDENAPPDETDSDADEEQEE) show a composition bias toward acidic residues. The 189-residue stretch at 431 to 619 (LFIFMVDASG…AEQIVEAALS (189 aa)) folds into the VWFA domain.

The protein belongs to the Mg-chelatase subunits D/I family.

It catalyses the reaction protoporphyrin IX + Mg(2+) + ATP + H2O = Mg-protoporphyrin IX + ADP + phosphate + 3 H(+). Its pathway is porphyrin-containing compound metabolism; bacteriochlorophyll biosynthesis. In terms of biological role, involved in bacteriochlorophyll biosynthesis; introduces a magnesium ion into protoporphyrin IX to yield Mg-protoporphyrin IX. This is Magnesium-chelatase 67 kDa subunit (bchD) from Chlorobaculum parvum (strain DSM 263 / NCIMB 8327) (Chlorobium vibrioforme subsp. thiosulfatophilum).